Consider the following 913-residue polypeptide: MFAPLLKKLFGSKNEREVKRMLKTVQIVNAFEEQMVALSDEQLRAKTEEFKARIAKGETLDQLLPEAFAVAREAGKRVMGMRHFDVQLIGGMTLHEGQIAEMRTGEGKTLVGTLAVYLNALSGKGVHVVTVNDYLARRDANWMRPLYEFLGLTVGIVTPFQPPEEKRAAYAADITYGTNNEYGFDYLRDNMAFSMDDKFQRELNFAVIDEVDSILIDEARTPLIISGQAEDSSKLYTEINRLIPKLEQHIEEVEGEVTKPGHFTVDEKTRQVELNEAGHQFIEEMLTEVGLLAEGESLYSAHNLGLLTHVYAGLRAHKLFNRNVEYIVADGQVLLVDEHTGRTMPGRRLSEGLHQAIEAKENLNIQAESQTLASTTFQNYFRLYNKLSGMTGTADTEAFEFHQIYNLAVMVIPPNKPLARKDFNDLVYLTAEEKYAAIVTDIKACIAENRPVLVGTATIETSEHMSNLLKQEGIDHKVLNAKFHEKEAEIIAQAGRPGALTIATNMAGRGTDILLGGNWEVEVANLEDPTPEQIAQIKADWQKRHQQVIEAGGLHVIASERHESRRIDNQLRGRAGRQGDTGSSRFYLSLEDSLMRIFASDRVKNFMKALGMQSGEAIEHRMVTNAIEKAQRKVEGRNFDIRKQLLEFDDVANEQRKVIYHMRNTLLAAENIGETIADFREEVLNNLISQHIPPQSLPEQWNVAGLEAALNTDFAVKLPVQQWLDEDDNLHEDSLREKIMAQLLVAYNEKEDQASAEALRSFEKQILLRVLDDLWKDHLSTMDHLRHGIHLRGYAQKNPKQEYKRESFTLFQELLDSIKRDTIRVLSHVQVRREDPEEEEARLRQEAEELASRMQFEHAPAPGIDQPLLDEEGGEAPVAVASEPVRNDQKLGRNELCWCGSGKKFKHCHGQIN.

Residues glutamine 87, 105–109, and aspartate 512 contribute to the ATP site; that span reads GEGKT. Residues cysteine 897, cysteine 899, cysteine 908, and histidine 909 each coordinate Zn(2+).

Belongs to the SecA family. As to quaternary structure, monomer and homodimer. Part of the essential Sec protein translocation apparatus which comprises SecA, SecYEG and auxiliary proteins SecDF-YajC and YidC. It depends on Zn(2+) as a cofactor.

The protein resides in the cell inner membrane. Its subcellular location is the cytoplasm. It carries out the reaction ATP + H2O + cellular proteinSide 1 = ADP + phosphate + cellular proteinSide 2.. In terms of biological role, part of the Sec protein translocase complex. Interacts with the SecYEG preprotein conducting channel. Has a central role in coupling the hydrolysis of ATP to the transfer of proteins into and across the cell membrane, serving both as a receptor for the preprotein-SecB complex and as an ATP-driven molecular motor driving the stepwise translocation of polypeptide chains across the membrane. This is Protein translocase subunit SecA from Pseudomonas savastanoi pv. phaseolicola (strain 1448A / Race 6) (Pseudomonas syringae pv. phaseolicola (strain 1448A / Race 6)).